The primary structure comprises 214 residues: Adenylate kinase (214 aa).

10–15 (GAGKGT) is a binding site for ATP. Residues 30–59 (STGDILRAAVKDMTPMGGKAKSFMDAGALV) are NMP. Residues Thr-31, Arg-36, 57–59 (ALV), 85–88 (GFPR), and Gln-92 each bind AMP. The segment at 126 to 163 (GRRTCRNCGKGFHVSFDPPKSSGICDECSGELYQRDDD) is LID. Residue Arg-127 coordinates ATP. Zn(2+) is bound by residues Cys-130, Cys-133, Cys-150, and Cys-153. AMP-binding residues include Arg-160 and Arg-171. Gly-199 lines the ATP pocket.

The protein belongs to the adenylate kinase family. As to quaternary structure, monomer.

The protein localises to the cytoplasm. The enzyme catalyses AMP + ATP = 2 ADP. It functions in the pathway purine metabolism; AMP biosynthesis via salvage pathway; AMP from ADP: step 1/1. Functionally, catalyzes the reversible transfer of the terminal phosphate group between ATP and AMP. Plays an important role in cellular energy homeostasis and in adenine nucleotide metabolism. The chain is Adenylate kinase from Geotalea daltonii (strain DSM 22248 / JCM 15807 / FRC-32) (Geobacter daltonii).